A 59-amino-acid chain; its full sequence is Photosystem II reaction center protein K (59 aa).

Positions 1 to 22 are excised as a propeptide; that stretch reads MLNIFSLICLNSALHSSSFFFA. Residues 38–58 form a helical membrane-spanning segment; it reads MPVIPVLFFLLALVWQAAVSF.

Belongs to the PsbK family. In terms of assembly, PSII is composed of 1 copy each of membrane proteins PsbA, PsbB, PsbC, PsbD, PsbE, PsbF, PsbH, PsbI, PsbJ, PsbK, PsbL, PsbM, PsbT, PsbX, PsbY, PsbZ, Psb30/Ycf12, at least 3 peripheral proteins of the oxygen-evolving complex and a large number of cofactors. It forms dimeric complexes.

The protein localises to the plastid. It is found in the chloroplast thylakoid membrane. Functionally, one of the components of the core complex of photosystem II (PSII). PSII is a light-driven water:plastoquinone oxidoreductase that uses light energy to abstract electrons from H(2)O, generating O(2) and a proton gradient subsequently used for ATP formation. It consists of a core antenna complex that captures photons, and an electron transfer chain that converts photonic excitation into a charge separation. The protein is Photosystem II reaction center protein K of Calycanthus floridus var. glaucus (Eastern sweetshrub).